We begin with the raw amino-acid sequence, 203 residues long: Cytochrome c biogenesis CcmF N-terminal-like mitochondrial protein 2 (203 aa).

Helical transmembrane passes span 44–64 and 143–163; these read IWIL…SWWA and IFLW…FYQM.

This sequence belongs to the CcmF/CycK/Ccl1/NrfE/CcsA family. In terms of assembly, interacts with CCMFC, CCMFN1, CCMH and CYTC-1.

The protein resides in the mitochondrion inner membrane. Forms a complex with CCMFC, CCMFN1 and CCMH that performs the assembly of heme with c-type apocytochromes in mitochondria. This chain is Cytochrome c biogenesis CcmF N-terminal-like mitochondrial protein 2, found in Arabidopsis thaliana (Mouse-ear cress).